We begin with the raw amino-acid sequence, 386 residues long: Cytochrome b (386 aa).

Transmembrane regions (helical) follow at residues 32-52 (FGSL…TLAM), 76-98 (WLIR…LHVG), 113-133 (TWII…LGYV), and 179-199 (FFAL…MHLI). The heme b site is built by histidine 82 and histidine 96. Positions 183 and 197 each coordinate heme b. Histidine 202 contributes to the a ubiquinone binding site. 4 helical membrane passes run 226-246 (YIFK…LFVF), 290-310 (LLGV…PITD), 322-342 (LSKV…QLGA), and 349-369 (FIEF…VIMP).

This sequence belongs to the cytochrome b family. As to quaternary structure, fungal cytochrome b-c1 complex contains 10 subunits; 3 respiratory subunits, 2 core proteins and 5 low-molecular weight proteins. Cytochrome b-c1 complex is a homodimer. It depends on heme b as a cofactor.

It localises to the mitochondrion inner membrane. In terms of biological role, component of the ubiquinol-cytochrome c reductase complex (complex III or cytochrome b-c1 complex) that is part of the mitochondrial respiratory chain. The b-c1 complex mediates electron transfer from ubiquinol to cytochrome c. Contributes to the generation of a proton gradient across the mitochondrial membrane that is then used for ATP synthesis. The polypeptide is Cytochrome b (cob) (Talaromyces marneffei (Penicillium marneffei)).